Consider the following 89-residue polypeptide: Large ribosomal subunit protein bL27 (89 aa).

Residues 1 to 22 (MAHTKKGGSSRNGRDSESKRLG) are disordered.

The protein belongs to the bacterial ribosomal protein bL27 family.

This is Large ribosomal subunit protein bL27 from Brucella melitensis biotype 1 (strain ATCC 23456 / CCUG 17765 / NCTC 10094 / 16M).